The primary structure comprises 196 residues: Imidazoleglycerol-phosphate dehydratase (196 aa).

Belongs to the imidazoleglycerol-phosphate dehydratase family.

Its subcellular location is the cytoplasm. The catalysed reaction is D-erythro-1-(imidazol-4-yl)glycerol 3-phosphate = 3-(imidazol-4-yl)-2-oxopropyl phosphate + H2O. It participates in amino-acid biosynthesis; L-histidine biosynthesis; L-histidine from 5-phospho-alpha-D-ribose 1-diphosphate: step 6/9. In Oleidesulfovibrio alaskensis (strain ATCC BAA-1058 / DSM 17464 / G20) (Desulfovibrio alaskensis), this protein is Imidazoleglycerol-phosphate dehydratase.